The sequence spans 143 residues: Ayaconin (143 aa).

An N-terminal signal peptide occupies residues 1–22; sequence MSFLFFLVVLISIGLWVGPCVA.

Interacts with human F12 (inactive). As to expression, salivary gland.

It is found in the secreted. Its function is as follows. Inhibits the intrinsic blood coagulation pathway in the host by blocking activation of host coagulation factor XII (F12). This chain is Ayaconin, found in Lutzomyia ayacuchensis (Sand fly).